We begin with the raw amino-acid sequence, 153 residues long: Ribosomal RNA large subunit methyltransferase H (153 aa).

S-adenosyl-L-methionine is bound by residues Leu70, Gly102, and 121–126 (FSKMTF).

This sequence belongs to the RNA methyltransferase RlmH family. As to quaternary structure, homodimer.

The protein resides in the cytoplasm. The catalysed reaction is pseudouridine(1915) in 23S rRNA + S-adenosyl-L-methionine = N(3)-methylpseudouridine(1915) in 23S rRNA + S-adenosyl-L-homocysteine + H(+). In terms of biological role, specifically methylates the pseudouridine at position 1915 (m3Psi1915) in 23S rRNA. In Desulfotalea psychrophila (strain LSv54 / DSM 12343), this protein is Ribosomal RNA large subunit methyltransferase H.